Reading from the N-terminus, the 134-residue chain is Small ribosomal subunit protein uS11 (134 aa).

Belongs to the universal ribosomal protein uS11 family. In terms of assembly, part of the 30S ribosomal subunit. Interacts with proteins S7 and S18. Binds to IF-3.

Functionally, located on the platform of the 30S subunit, it bridges several disparate RNA helices of the 16S rRNA. Forms part of the Shine-Dalgarno cleft in the 70S ribosome. The polypeptide is Small ribosomal subunit protein uS11 (Corynebacterium diphtheriae (strain ATCC 700971 / NCTC 13129 / Biotype gravis)).